The sequence spans 105 residues: Pyrimidine/purine nucleoside phosphorylase (105 aa).

Belongs to the nucleoside phosphorylase PpnP family.

The catalysed reaction is a purine D-ribonucleoside + phosphate = a purine nucleobase + alpha-D-ribose 1-phosphate. It catalyses the reaction adenosine + phosphate = alpha-D-ribose 1-phosphate + adenine. The enzyme catalyses cytidine + phosphate = cytosine + alpha-D-ribose 1-phosphate. It carries out the reaction guanosine + phosphate = alpha-D-ribose 1-phosphate + guanine. The catalysed reaction is inosine + phosphate = alpha-D-ribose 1-phosphate + hypoxanthine. It catalyses the reaction thymidine + phosphate = 2-deoxy-alpha-D-ribose 1-phosphate + thymine. The enzyme catalyses uridine + phosphate = alpha-D-ribose 1-phosphate + uracil. It carries out the reaction xanthosine + phosphate = alpha-D-ribose 1-phosphate + xanthine. In terms of biological role, catalyzes the phosphorolysis of diverse nucleosides, yielding D-ribose 1-phosphate and the respective free bases. Can use uridine, adenosine, guanosine, cytidine, thymidine, inosine and xanthosine as substrates. Also catalyzes the reverse reactions. This is Pyrimidine/purine nucleoside phosphorylase from Paracidovorax citrulli (strain AAC00-1) (Acidovorax citrulli).